Reading from the N-terminus, the 352-residue chain is Histidinol-phosphate aminotransferase (352 aa).

The residue at position 211 (K211) is an N6-(pyridoxal phosphate)lysine.

Belongs to the class-II pyridoxal-phosphate-dependent aminotransferase family. Histidinol-phosphate aminotransferase subfamily. In terms of assembly, homodimer. Pyridoxal 5'-phosphate is required as a cofactor.

It catalyses the reaction L-histidinol phosphate + 2-oxoglutarate = 3-(imidazol-4-yl)-2-oxopropyl phosphate + L-glutamate. It participates in amino-acid biosynthesis; L-histidine biosynthesis; L-histidine from 5-phospho-alpha-D-ribose 1-diphosphate: step 7/9. The protein is Histidinol-phosphate aminotransferase of Haemophilus influenzae (strain PittEE).